The chain runs to 392 residues: Leucine aminopeptidase 1 (392 aa).

Positions 1 to 18 (MKFSQASLLAACLPAISA) are cleaved as a signal peptide. Positions 19-82 (RFIETAEADN…LGSTRLNAQT (64 aa)) are excised as a propeptide. Residue Asn-174 is glycosylated (N-linked (GlcNAc...) asparagine). The Zn(2+) site is built by His-182, Asp-201, Glu-240, and Asp-267. A disulfide bond links Cys-316 and Cys-320. Position 349 (His-349) interacts with Zn(2+).

Belongs to the peptidase M28 family. M28E subfamily. As to quaternary structure, monomer. Zn(2+) is required as a cofactor.

The protein localises to the secreted. Extracellular aminopeptidase that allows assimilation of proteinaceous substrates. The chain is Leucine aminopeptidase 1 (LAP1) from Fusarium vanettenii (strain ATCC MYA-4622 / CBS 123669 / FGSC 9596 / NRRL 45880 / 77-13-4) (Fusarium solani subsp. pisi).